A 354-amino-acid chain; its full sequence is NADH-quinone oxidoreductase subunit H (354 aa).

8 consecutive transmembrane segments (helical) span residues 23–43, 91–111, 124–144, 162–182, 203–223, 250–270, 291–311, and 330–350; these read LVRA…LILW, YIIA…VIPF, LLYV…AGWA, ISYE…TGSL, ILSW…ISGV, GMAF…ISAL, IPGF…FIWL, and IFIP…VSPW.

Belongs to the complex I subunit 1 family. As to quaternary structure, NDH-1 is composed of 14 different subunits. Subunits NuoA, H, J, K, L, M, N constitute the membrane sector of the complex.

Its subcellular location is the cell inner membrane. It carries out the reaction a quinone + NADH + 5 H(+)(in) = a quinol + NAD(+) + 4 H(+)(out). In terms of biological role, NDH-1 shuttles electrons from NADH, via FMN and iron-sulfur (Fe-S) centers, to quinones in the respiratory chain. The immediate electron acceptor for the enzyme in this species is believed to be ubiquinone. Couples the redox reaction to proton translocation (for every two electrons transferred, four hydrogen ions are translocated across the cytoplasmic membrane), and thus conserves the redox energy in a proton gradient. This subunit may bind ubiquinone. This Ralstonia pickettii (strain 12J) protein is NADH-quinone oxidoreductase subunit H.